Consider the following 125-residue polypeptide: Ribosome-binding factor A (125 aa).

Belongs to the RbfA family. In terms of assembly, monomer. Binds 30S ribosomal subunits, but not 50S ribosomal subunits or 70S ribosomes.

It localises to the cytoplasm. One of several proteins that assist in the late maturation steps of the functional core of the 30S ribosomal subunit. Associates with free 30S ribosomal subunits (but not with 30S subunits that are part of 70S ribosomes or polysomes). Required for efficient processing of 16S rRNA. May interact with the 5'-terminal helix region of 16S rRNA. This chain is Ribosome-binding factor A, found in Methylobacillus flagellatus (strain ATCC 51484 / DSM 6875 / VKM B-1610 / KT).